The sequence spans 529 residues: Bifunctional purine biosynthesis protein PurH (529 aa).

The MGS-like domain occupies 2–148; it reads QQLRPIHRAL…KNHKDVAIVV (147 aa).

The protein belongs to the PurH family.

It carries out the reaction (6R)-10-formyltetrahydrofolate + 5-amino-1-(5-phospho-beta-D-ribosyl)imidazole-4-carboxamide = 5-formamido-1-(5-phospho-D-ribosyl)imidazole-4-carboxamide + (6S)-5,6,7,8-tetrahydrofolate. The enzyme catalyses IMP + H2O = 5-formamido-1-(5-phospho-D-ribosyl)imidazole-4-carboxamide. Its pathway is purine metabolism; IMP biosynthesis via de novo pathway; 5-formamido-1-(5-phospho-D-ribosyl)imidazole-4-carboxamide from 5-amino-1-(5-phospho-D-ribosyl)imidazole-4-carboxamide (10-formyl THF route): step 1/1. It functions in the pathway purine metabolism; IMP biosynthesis via de novo pathway; IMP from 5-formamido-1-(5-phospho-D-ribosyl)imidazole-4-carboxamide: step 1/1. This Photorhabdus laumondii subsp. laumondii (strain DSM 15139 / CIP 105565 / TT01) (Photorhabdus luminescens subsp. laumondii) protein is Bifunctional purine biosynthesis protein PurH.